Reading from the N-terminus, the 303-residue chain is Probable cat1 operon transcriptional activator (303 aa).

An HTH lysR-type domain is found at 1–58 (MDLRQFRYFVAVARERNFTRAARQLNIAQPPLSRQIQLLEEEVGVPLLIRNSRPVQLT). A DNA-binding region (H-T-H motif) is located at residues 18–37 (FTRAARQLNIAQPPLSRQIQ).

It belongs to the LysR transcriptional regulatory family.

In terms of biological role, probable positive regulator of the cat1 operon which encode enzymes responsible for the degradation of catechol to acetyl-CoA via the beta-ketoadipate pathway. This is Probable cat1 operon transcriptional activator from Acinetobacter lwoffii.